Here is a 207-residue protein sequence, read N- to C-terminus: 3-isopropylmalate dehydratase small subunit (207 aa).

The protein belongs to the LeuD family. LeuD type 1 subfamily. As to quaternary structure, heterodimer of LeuC and LeuD.

It catalyses the reaction (2R,3S)-3-isopropylmalate = (2S)-2-isopropylmalate. The protein operates within amino-acid biosynthesis; L-leucine biosynthesis; L-leucine from 3-methyl-2-oxobutanoate: step 2/4. Its function is as follows. Catalyzes the isomerization between 2-isopropylmalate and 3-isopropylmalate, via the formation of 2-isopropylmaleate. The polypeptide is 3-isopropylmalate dehydratase small subunit (leuD) (Buchnera aphidicola subsp. Rhopalosiphum padi).